The primary structure comprises 405 residues: Phosphopentomutase (405 aa).

D10, D303, H308, D344, H345, and H356 together coordinate Mn(2+).

It belongs to the phosphopentomutase family. Mn(2+) serves as cofactor.

Its subcellular location is the cytoplasm. It carries out the reaction 2-deoxy-alpha-D-ribose 1-phosphate = 2-deoxy-D-ribose 5-phosphate. The enzyme catalyses alpha-D-ribose 1-phosphate = D-ribose 5-phosphate. It functions in the pathway carbohydrate degradation; 2-deoxy-D-ribose 1-phosphate degradation; D-glyceraldehyde 3-phosphate and acetaldehyde from 2-deoxy-alpha-D-ribose 1-phosphate: step 1/2. Its function is as follows. Isomerase that catalyzes the conversion of deoxy-ribose 1-phosphate (dRib-1-P) and ribose 1-phosphate (Rib-1-P) to deoxy-ribose 5-phosphate (dRib-5-P) and ribose 5-phosphate (Rib-5-P), respectively. The chain is Phosphopentomutase from Shewanella loihica (strain ATCC BAA-1088 / PV-4).